Consider the following 84-residue polypeptide: Hydramacin-1 (84 aa).

A signal peptide spans 1 to 24 (MRTVVFFILVSIFLVALKPTGTQA). Q25 bears the Pyrrolidone carboxylic acid mark. 4 cysteine pairs are disulfide-bonded: C29–C72, C36–C65, C51–C81, and C55–C83.

As to expression, expressed in the endodermal epithelium.

It localises to the secreted. It is found in the target cell membrane. Functionally, cationic antimicrobial peptide potently active against Gram-positive and Gram-negative bacteria including multi-resistant human pathogenic strains. Is not active against the Gram-positive Coccus species, Gram-negative non-fermentation species and against the fungus C.albicans. It leads to aggregation of bacteria as an initial step of its bactericidal mechanism. Aggregated cells are connected via electron-dense contacts and adopt a thorn apple-like morphology. Hydramycin contains a belt of positively charged residues that separate two hydrophobic areas. This structure may explain the observed aggregation of bacteria, since each of these areas can immerse into the outer leaflets of the membranes of two individual bacteria. Is able to permeabilize membranes of viable bacteria at low and neutral pH values, but no pore-forming activity is not detected. The chain is Hydramacin-1 from Hydra vulgaris (Hydra).